Reading from the N-terminus, the 31-residue chain is Cyclotide mech-6 (31 aa).

Positions 1 to 31 (GVIPCGESCVFIPCISSVVGCTCKNKVCYRN) form a cross-link, cyclopeptide (Gly-Asn). 3 disulfides stabilise this stretch: Cys5–Cys21, Cys9–Cys23, and Cys14–Cys28.

Post-translationally, this is a cyclic peptide. In terms of processing, contains 3 disulfide bonds.

Functionally, probably participates in a plant defense mechanism (Potential). Binds to and induces leakage in phospholipd membranes, particularly ones containing 1-palmitoyl-2-oleophosphatidylethanolamine (POPE). In Melicytus chathamicus (Chatham Island mahoe), this protein is Cyclotide mech-6.